We begin with the raw amino-acid sequence, 274 residues long: 2,3,4,5-tetrahydropyridine-2,6-dicarboxylate N-succinyltransferase (274 aa).

Residues Arg107 and Asp144 each coordinate substrate.

This sequence belongs to the transferase hexapeptide repeat family. Homotrimer.

It is found in the cytoplasm. The enzyme catalyses (S)-2,3,4,5-tetrahydrodipicolinate + succinyl-CoA + H2O = (S)-2-succinylamino-6-oxoheptanedioate + CoA. It participates in amino-acid biosynthesis; L-lysine biosynthesis via DAP pathway; LL-2,6-diaminopimelate from (S)-tetrahydrodipicolinate (succinylase route): step 1/3. The sequence is that of 2,3,4,5-tetrahydropyridine-2,6-dicarboxylate N-succinyltransferase from Cereibacter sphaeroides (strain ATCC 17029 / ATH 2.4.9) (Rhodobacter sphaeroides).